The chain runs to 79 residues: D-alanyl carrier protein (79 aa).

A Carrier domain is found at methionine 1–glutamine 77. Serine 35 carries the O-(pantetheine 4'-phosphoryl)serine modification.

It belongs to the DltC family. Post-translationally, 4'-phosphopantetheine is transferred from CoA to a specific serine of apo-DCP.

Its subcellular location is the cytoplasm. The protein operates within cell wall biogenesis; lipoteichoic acid biosynthesis. Its function is as follows. Carrier protein involved in the D-alanylation of lipoteichoic acid (LTA). The loading of thioester-linked D-alanine onto DltC is catalyzed by D-alanine--D-alanyl carrier protein ligase DltA. The DltC-carried D-alanyl group is further transferred to cell membrane phosphatidylglycerol (PG) by forming an ester bond, probably catalyzed by DltD. D-alanylation of LTA plays an important role in modulating the properties of the cell wall in Gram-positive bacteria, influencing the net charge of the cell wall. The polypeptide is D-alanyl carrier protein (Streptococcus equi subsp. equi (strain 4047)).